Here is a 63-residue protein sequence, read N- to C-terminus: Defensin-like protein 278 (63 aa).

Residues 1–15 (MSLVYMYMYIGVVMS) form the signal peptide. Intrachain disulfides connect Cys-31-Cys-48, Cys-37-Cys-53, and Cys-41-Cys-55.

Belongs to the DEFL family.

It localises to the secreted. The polypeptide is Defensin-like protein 278 (Arabidopsis thaliana (Mouse-ear cress)).